Reading from the N-terminus, the 427-residue chain is Serine hydroxymethyltransferase (427 aa).

Residues Leu-117 and 121–123 (GHL) contribute to the (6S)-5,6,7,8-tetrahydrofolate site. Position 226 is an N6-(pyridoxal phosphate)lysine (Lys-226).

This sequence belongs to the SHMT family. Homodimer. It depends on pyridoxal 5'-phosphate as a cofactor.

Its subcellular location is the cytoplasm. The enzyme catalyses (6R)-5,10-methylene-5,6,7,8-tetrahydrofolate + glycine + H2O = (6S)-5,6,7,8-tetrahydrofolate + L-serine. It catalyses the reaction L-threonine = acetaldehyde + glycine. The catalysed reaction is L-allo-threonine = acetaldehyde + glycine. The protein operates within one-carbon metabolism; tetrahydrofolate interconversion. It participates in amino-acid biosynthesis; glycine biosynthesis; glycine from L-serine: step 1/1. Its primary function is to catalyze the reversible interconversion of serine and glycine with tetrahydrofolate (THF) serving as the one-carbon carrier. This reaction serves as the major source of one-carbon groups required for the biosynthesis of purines, thymidylate, methionine, and other important biomolecules. Also exhibits THF-independent aldolase activity toward beta-hydroxyamino acids, producing glycine and aldehydes, via a retro-aldol mechanism. Thus, is able to catalyze the cleavage of L-threonine, L-allo-threonine, L-threo-beta-phenylserine and L-erythro-beta-phenylserine. This second activity is likely to be physiological in H.thermophilus, which is an organism that lacks the ortholog gene for the 'real' threonine aldolase characterized in mesophilic bacteria (LtaE), yeast and plants. In Hydrogenobacter thermophilus (strain DSM 6534 / IAM 12695 / TK-6), this protein is Serine hydroxymethyltransferase.